A 442-amino-acid polypeptide reads, in one-letter code: tRNA modification GTPase MnmE (442 aa).

The (6S)-5-formyl-5,6,7,8-tetrahydrofolate site is built by Arg-27, Glu-84, and Lys-124. Residues Gly-221 to Glu-366 form the TrmE-type G domain. GTP is bound by residues Asn-231–Ser-236, Ser-250–Thr-256, and Asp-275–Gly-278. 2 residues coordinate Mg(2+): Ser-235 and Thr-256. (6S)-5-formyl-5,6,7,8-tetrahydrofolate is bound at residue Lys-442.

Belongs to the TRAFAC class TrmE-Era-EngA-EngB-Septin-like GTPase superfamily. TrmE GTPase family. In terms of assembly, homodimer. Heterotetramer of two MnmE and two MnmG subunits. The cofactor is K(+).

The protein resides in the cytoplasm. Functionally, exhibits a very high intrinsic GTPase hydrolysis rate. Involved in the addition of a carboxymethylaminomethyl (cmnm) group at the wobble position (U34) of certain tRNAs, forming tRNA-cmnm(5)s(2)U34. The sequence is that of tRNA modification GTPase MnmE from Brucella canis (strain ATCC 23365 / NCTC 10854 / RM-666).